The sequence spans 211 residues: FMN-dependent NADH:quinone oxidoreductase 2 (211 aa).

Residue 102–105 (MWNF) coordinates FMN.

The protein belongs to the azoreductase type 1 family. In terms of assembly, homodimer. FMN serves as cofactor.

It carries out the reaction 2 a quinone + NADH + H(+) = 2 a 1,4-benzosemiquinone + NAD(+). It catalyses the reaction N,N-dimethyl-1,4-phenylenediamine + anthranilate + 2 NAD(+) = 2-(4-dimethylaminophenyl)diazenylbenzoate + 2 NADH + 2 H(+). Functionally, quinone reductase that provides resistance to thiol-specific stress caused by electrophilic quinones. In terms of biological role, also exhibits azoreductase activity. Catalyzes the reductive cleavage of the azo bond in aromatic azo compounds to the corresponding amines. The chain is FMN-dependent NADH:quinone oxidoreductase 2 from Bacillus cereus (strain ATCC 14579 / DSM 31 / CCUG 7414 / JCM 2152 / NBRC 15305 / NCIMB 9373 / NCTC 2599 / NRRL B-3711).